The following is a 322-amino-acid chain: 4-hydroxy-3-methylbut-2-enyl diphosphate reductase 1 (322 aa).

Position 18 (cysteine 18) interacts with [4Fe-4S] cluster. (2E)-4-hydroxy-3-methylbut-2-enyl diphosphate-binding residues include histidine 47 and histidine 82. 2 residues coordinate dimethylallyl diphosphate: histidine 47 and histidine 82. Isopentenyl diphosphate contacts are provided by histidine 47 and histidine 82. [4Fe-4S] cluster is bound at residue cysteine 104. Histidine 132 is a binding site for (2E)-4-hydroxy-3-methylbut-2-enyl diphosphate. A dimethylallyl diphosphate-binding site is contributed by histidine 132. Histidine 132 contributes to the isopentenyl diphosphate binding site. Residue glutamate 134 is the Proton donor of the active site. Threonine 173 provides a ligand contact to (2E)-4-hydroxy-3-methylbut-2-enyl diphosphate. Cysteine 203 is a [4Fe-4S] cluster binding site. Serine 231, serine 232, asparagine 233, and serine 276 together coordinate (2E)-4-hydroxy-3-methylbut-2-enyl diphosphate. Dimethylallyl diphosphate is bound by residues serine 231, serine 232, asparagine 233, and serine 276. Isopentenyl diphosphate-binding residues include serine 231, serine 232, asparagine 233, and serine 276.

This sequence belongs to the IspH family. The cofactor is [4Fe-4S] cluster.

It catalyses the reaction isopentenyl diphosphate + 2 oxidized [2Fe-2S]-[ferredoxin] + H2O = (2E)-4-hydroxy-3-methylbut-2-enyl diphosphate + 2 reduced [2Fe-2S]-[ferredoxin] + 2 H(+). The enzyme catalyses dimethylallyl diphosphate + 2 oxidized [2Fe-2S]-[ferredoxin] + H2O = (2E)-4-hydroxy-3-methylbut-2-enyl diphosphate + 2 reduced [2Fe-2S]-[ferredoxin] + 2 H(+). It functions in the pathway isoprenoid biosynthesis; dimethylallyl diphosphate biosynthesis; dimethylallyl diphosphate from (2E)-4-hydroxy-3-methylbutenyl diphosphate: step 1/1. The protein operates within isoprenoid biosynthesis; isopentenyl diphosphate biosynthesis via DXP pathway; isopentenyl diphosphate from 1-deoxy-D-xylulose 5-phosphate: step 6/6. In terms of biological role, catalyzes the conversion of 1-hydroxy-2-methyl-2-(E)-butenyl 4-diphosphate (HMBPP) into a mixture of isopentenyl diphosphate (IPP) and dimethylallyl diphosphate (DMAPP). Acts in the terminal step of the DOXP/MEP pathway for isoprenoid precursor biosynthesis. The polypeptide is 4-hydroxy-3-methylbut-2-enyl diphosphate reductase 1 (Bradyrhizobium diazoefficiens (strain JCM 10833 / BCRC 13528 / IAM 13628 / NBRC 14792 / USDA 110)).